The chain runs to 519 residues: ATP synthase subunit beta (519 aa).

The span at 1–26 shows a compositional bias: low complexity; that stretch reads MAKAATPKRAPARAAAIPAAATPAAK. The segment at 1-40 is disordered; that stretch reads MAKAATPKRAPARAAAIPAAATPAAKPAKRASTRSAAARS. 197–204 serves as a coordination point for ATP; that stretch reads GGAGVGKT.

The protein belongs to the ATPase alpha/beta chains family. F-type ATPases have 2 components, CF(1) - the catalytic core - and CF(0) - the membrane proton channel. CF(1) has five subunits: alpha(3), beta(3), gamma(1), delta(1), epsilon(1). CF(0) has three main subunits: a(1), b(2) and c(9-12). The alpha and beta chains form an alternating ring which encloses part of the gamma chain. CF(1) is attached to CF(0) by a central stalk formed by the gamma and epsilon chains, while a peripheral stalk is formed by the delta and b chains.

The protein resides in the cell inner membrane. It catalyses the reaction ATP + H2O + 4 H(+)(in) = ADP + phosphate + 5 H(+)(out). Its function is as follows. Produces ATP from ADP in the presence of a proton gradient across the membrane. The catalytic sites are hosted primarily by the beta subunits. In Chelativorans sp. (strain BNC1), this protein is ATP synthase subunit beta.